The sequence spans 614 residues: Allergen Ara h 1, clone P17 (614 aa).

The N-terminal stretch at 1–25 is a signal peptide; sequence MRGRVSPLMLLLGILVLASVSATQA. Disordered stretches follow at residues 72–177, 334–356, 372–397, and 464–491; these read DTGA…RRFS, NAGG…DNEG, HAKS…DGEP, and KEQQ…SNRE. A compositionally biased stretch (basic and acidic residues) spans 81-132; sequence PPGERTRGRQPGDYDDDRRQPRREEGGRWGPAEPREREREEDWRQPREDWRR. One can recognise a Cupin type-1 1 domain in the interval 169–327; sequence FYFPSRRFST…AFNAEFNEIR (159 aa). Residues 390–566 form the Cupin type-1 2 domain; that stretch reads INLRDGEPDL…AFPGSGEQVE (177 aa). A compositionally biased stretch (basic and acidic residues) spans 464–474; sequence KEQQQRGRREQ. Positions 475-486 are enriched in acidic residues; sequence EWEEEEEDEEEE. The N-linked (GlcNAc...) asparagine glycan is linked to N516. The interval 572–614 is disordered; that stretch reads QRESHFVSARPQSQSPSSPEKEDQEEENQGGKGPLLSILKAFN.

This sequence belongs to the 7S seed storage protein family.

The sequence is that of Allergen Ara h 1, clone P17 from Arachis hypogaea (Peanut).